The sequence spans 515 residues: Bifunctional solanapyrone synthase (515 aa).

The N-terminal stretch at 1–25 is a signal peptide; it reads MRLIILNLLSLGITPSVVGHSGPHR. The N-linked (GlcNAc...) asparagine glycan is linked to Asn66. One can recognise an FAD-binding PCMH-type domain in the interval 91–261; it reads APKNPACIYT…THIVQRTYPL (171 aa). His128 carries the pros-8alpha-FAD histidine modification. 2 N-linked (GlcNAc...) asparagine glycosylation sites follow: Asn274 and Asn355.

Belongs to the oxygen-dependent FAD-linked oxidoreductase family. It depends on FAD as a cofactor.

The enzyme catalyses prosolanapyrone II + O2 = prosolanapyrone III + H2O2. It catalyses the reaction prosolanapyrone III = (-)-solanapyrone A. It carries out the reaction prosolanapyrone III = solanapyrone D. Its pathway is phytotoxin biosynthesis. In terms of biological role, bifunctional solanapyrone synthase; part of the gene cluster that mediates the biosynthesis of the phytotoxin solanapyrone, a causal agent of early blight disease of potato and tomato. The prosolanapyrone synthase sol1 is a polyketide synthase that produces the octaketide desmethylprosolanapyrone I via sequential condensations of 7 malonyl-CoA units with one acetyl-CoA unit, and one methylation step. The octaketide backbone is further methylated by the sol2 O-methyltransferase to yield prosolanapyrone I. Prosolanapyrone I is hydroxylated to prosolanapyrone II by the cytochrome P450 monooxygenase sol6. The solanapyrone synthase sol5 then catalyzes the oxidation of prosolanapyrone II and the subsequent Diels Alder cycloisomerization of the product prosolanapyrone III to solanapyrones A and D. Solanapyrones A and D are then converted into solanapyrones B and E, respectively, by the sol3 dehydrogenase. The sequence is that of Bifunctional solanapyrone synthase (sol5) from Alternaria solani.